Reading from the N-terminus, the 171-residue chain is 16S rRNA aminocarboxypropyltransferase (171 aa).

S-adenosyl-L-methionine-binding residues include T18, L68, L91, and S110.

It belongs to the TDD superfamily. TSR3 family.

The protein resides in the cytoplasm. The enzyme catalyses an N(1)-methylpseudouridine in rRNA + S-adenosyl-L-methionine = N(1)-methyl-N(3)-[(3S)-3-amino-3-carboxypropyl]pseudouridine in rRNA + S-methyl-5'-thioadenosine + H(+). Aminocarboxypropyltransferase that catalyzes the aminocarboxypropyl transfer on pseudouridine corresponding to position 914 in M.jannaschii 16S rRNA. It constitutes the last step in biosynthesis of the hypermodified N1-methyl-N3-(3-amino-3-carboxypropyl) pseudouridine (m1acp3-Psi). This chain is 16S rRNA aminocarboxypropyltransferase, found in Methanosphaera stadtmanae (strain ATCC 43021 / DSM 3091 / JCM 11832 / MCB-3).